Reading from the N-terminus, the 779-residue chain is Kazrin (779 aa).

A coiled-coil region spans residues 79 to 261 (AQVLLREEVV…LATLTKDVPK (183 aa)). Positions 295-366 (QQTLYHSHPP…PGPVQKSLHN (72 aa)) are disordered. Phosphoserine is present on residues Ser-356, Ser-371, and Ser-391. A disordered region spans residues 403–429 (KSLDPGLFDDSDSQCSPTRHSLSLSEG). Positions 415 to 426 (SQCSPTRHSLSL) are enriched in polar residues. 3 SAM domains span residues 450-515 (WKAG…YRDA), 528-592 (DHHW…LYQV), and 616-683 (WTNQ…STIF). Residues 685-779 (PSNSTGIRES…GYGSLEVTNV (95 aa)) are disordered. The segment covering 736 to 746 (SSKEPDFHDDY) has biased composition (basic and acidic residues).

Belongs to the kazrin family. In terms of tissue distribution, expressed in skin interfollicular epidermis and hair follicles. Expressed in tongue epithelium basal suprabasal layers.

Its subcellular location is the cell junction. It is found in the nucleus. The protein resides in the cytoplasm. The protein localises to the cytoskeleton. Functionally, component of the cornified envelope of keratinocytes. May be involved in the interplay between adherens junctions and desmosomes. The function in the nucleus is not known. This is Kazrin (Kazn) from Mus musculus (Mouse).